Here is a 256-residue protein sequence, read N- to C-terminus: Doublecortin domain-containing protein (256 aa).

The interval 71–103 (NVFERLTDTAYYTGSHRERFDEFGNGRGIAGRE) is partial p25alpha domain. Residues 152-226 (RLMWLYRNGD…AKYLCTSGEP (75 aa)) form the Doublecortin domain.

Its subcellular location is the cytoplasm. The protein localises to the cytoskeleton. Functionally, specifically required in the formation and maintenance of the conoid fibers; the conoid is a component of the cytoskeletal apical complex, which is composed of a left-handed spiral of 14 fibers made from a nontubular tubulin polymer. Promotes the organization, curvature, and stability of the conoid fibers, and probably bridges other conoid components to the tubulin core. This is Doublecortin domain-containing protein from Toxoplasma gondii (strain ATCC 50861 / VEG).